A 420-amino-acid polypeptide reads, in one-letter code: Protein translocase subunit SecY (420 aa).

10 helical membrane passes run 9-29, 61-81, 104-124, 141-161, 173-193, 203-223, 257-277, 300-320, 355-375, and 377-397; these read ILIT…PIPG, LSII…MELL, IVRY…SVGL, VFMI…MWIG, ISLI…SGTF, ILML…IIYV, LSGV…STIL, YNIL…SIVF, KLTL…WILV, and AMGV…QVAI.

Belongs to the SecY/SEC61-alpha family. Component of the Sec protein translocase complex. Heterotrimer consisting of SecY, SecE and SecG subunits. The heterotrimers can form oligomers, although 1 heterotrimer is thought to be able to translocate proteins. Interacts with the ribosome. Interacts with SecDF, and other proteins may be involved. Interacts with SecA.

The protein resides in the cell inner membrane. Functionally, the central subunit of the protein translocation channel SecYEG. Consists of two halves formed by TMs 1-5 and 6-10. These two domains form a lateral gate at the front which open onto the bilayer between TMs 2 and 7, and are clamped together by SecE at the back. The channel is closed by both a pore ring composed of hydrophobic SecY resides and a short helix (helix 2A) on the extracellular side of the membrane which forms a plug. The plug probably moves laterally to allow the channel to open. The ring and the pore may move independently. This is Protein translocase subunit SecY from Helicobacter pylori (strain ATCC 700392 / 26695) (Campylobacter pylori).